The primary structure comprises 1395 residues: DNA-directed RNA polymerase subunit beta' (1395 aa).

Cys-70, Cys-72, Cys-85, and Cys-88 together coordinate Zn(2+). Mg(2+)-binding residues include Asp-460, Asp-462, and Asp-464. Zn(2+) is bound by residues Cys-814, Cys-888, Cys-895, and Cys-898.

The protein belongs to the RNA polymerase beta' chain family. The RNAP catalytic core consists of 2 alpha, 1 beta, 1 beta' and 1 omega subunit. When a sigma factor is associated with the core the holoenzyme is formed, which can initiate transcription. It depends on Mg(2+) as a cofactor. Zn(2+) is required as a cofactor.

The catalysed reaction is RNA(n) + a ribonucleoside 5'-triphosphate = RNA(n+1) + diphosphate. Its function is as follows. DNA-dependent RNA polymerase catalyzes the transcription of DNA into RNA using the four ribonucleoside triphosphates as substrates. The chain is DNA-directed RNA polymerase subunit beta' from Pseudoalteromonas atlantica (strain T6c / ATCC BAA-1087).